An 865-amino-acid chain; its full sequence is DNA mismatch repair protein MutS (865 aa).

Residue 605–612 (GPNMAGKS) coordinates ATP. The interval 814–833 (PEPLEAYKPKGNKQPLSDEE) is disordered.

It belongs to the DNA mismatch repair MutS family.

This protein is involved in the repair of mismatches in DNA. It is possible that it carries out the mismatch recognition step. This protein has a weak ATPase activity. The sequence is that of DNA mismatch repair protein MutS from Halalkalibacterium halodurans (strain ATCC BAA-125 / DSM 18197 / FERM 7344 / JCM 9153 / C-125) (Bacillus halodurans).